A 210-amino-acid chain; its full sequence is MAKTIGLLGKKLGMTRVFADDGSVVPVTVLEVGPCPVMQVKTEEKEGYNAIQIGYDALPERKVNKPAKGHQEKAGKGYFRHLREFPLESVADYELGQEISVDIFAAGEKVKVTGTSKGKGFQGVMKRWNFAGSRASHGAEKVHRSPGSIGHATFPGKVFKGKKMPGQMGNERVTVSNIEIVDVRADENVLVVKGQVPGPKNGLVMIRKTS.

The tract at residues 139-165 (AEKVHRSPGSIGHATFPGKVFKGKKMP) is disordered.

Belongs to the universal ribosomal protein uL3 family. As to quaternary structure, part of the 50S ribosomal subunit. Forms a cluster with proteins L14 and L19.

Its function is as follows. One of the primary rRNA binding proteins, it binds directly near the 3'-end of the 23S rRNA, where it nucleates assembly of the 50S subunit. The protein is Large ribosomal subunit protein uL3 of Maridesulfovibrio salexigens (strain ATCC 14822 / DSM 2638 / NCIMB 8403 / VKM B-1763) (Desulfovibrio salexigens).